We begin with the raw amino-acid sequence, 175 residues long: Regenerating islet-derived protein 3-gamma (175 aa).

An N-terminal signal peptide occupies residues 1-26; the sequence is MLPPMALPSVSWMLLSCLILLCQVQG. A propeptide spanning residues 27-37 is cleaved from the precursor; sequence EETQKELPSPR. 3 cysteine pairs are disulfide-bonded: C40–C51, C68–C171, and C146–C163. A C-type lectin domain is found at 47 to 172; it reads YGSPCYALFL…CDAKLPYVCK (126 aa). Residues 103–118 form a sufficient to activate EXTL3 region; the sequence is WIGLHDPTQGSEPDGD. H107 serves as a coordination point for Zn(2+). Residues 114–116 carry the EPN motif; sequence EPD. Zn(2+) is bound by residues E121 and H145.

As to quaternary structure, forms a hexameric membrane-permeabilizing oligomeric pore on membrane phospholipids. The hexamer is formed by three dimers related by helical symmetry. Forms filaments, filamentation traps pore complexes and limits damage to host cells. Interacts with EXTL3. Proteolytic processing by trypsin removes an inhibitory N-terminal propeptide and is essential for peptidoglycan binding and antibacterial activity. As to expression, predominantly expressed in pancreas, where it may be restricted to exocrine pancreas. Moderate expression levels in testis and weak in heart, kidney and placenta.

The protein localises to the secreted. The protein resides in the cytoplasm. Its activity is regulated as follows. Lipopolysaccharide inhibits pore-forming activity, explaining why is bactericidal for Gram-positive but not Gram-negative bacteria. Bactericidal C-type lectin which acts exclusively against Gram-positive bacteria and mediates bacterial killing by binding to surface-exposed carbohydrate moieties of peptidoglycan. Restricts bacterial colonization of the intestinal epithelial surface and consequently limits activation of adaptive immune responses by the microbiota. Its function is as follows. Acts as a hormone in response to different stimuli like anti-inflammatory signals, such as IL17A, or gut microbiome. Is secreted by different cell types to activate its receptor EXTL3 and induce cell specific signaling pathways. Induced by IL17A in keratinocytes, regulates keratinocyte proliferation and differentiation after skin injury. In parallel, inhibits skin inflammation through the inhibition of inflammatory cytokines such as IL6 and TNF. Induced by IL22 in lung epithelial cells, inhibits cytokine production and regulates allergic airway inflammation. Induced in small intestine by inulin-enriched diet and Lactobacillus gasseri enriched microbiome, plays a role in the improvement of gut barrier function, the regulation of energy balance and glucose levels. Modulates microbiota composition in duodenal contents. Produced by nociceptor in response to endotoxins, prevents endotoxic death by targeting kynurenine pathway in microglia. Functionally, has bacteriostatic activity. In terms of biological role, has bactericidal activity against L.monocytogenes and methicillin-resistant S.aureus. The chain is Regenerating islet-derived protein 3-gamma from Homo sapiens (Human).